A 264-amino-acid polypeptide reads, in one-letter code: NAD-capped RNA hydrolase NudC (264 aa).

Zn(2+)-binding residues include Cys-99 and Cys-102. Glu-112 lines the substrate pocket. Zn(2+) contacts are provided by Cys-117 and Cys-120. Substrate is bound at residue Tyr-125. The 128-residue stretch at Pro-126–Thr-253 folds into the Nudix hydrolase domain. A divalent metal cation contacts are provided by Ala-162, Glu-178, and Glu-182. The short motif at Gly-163–Gly-184 is the Nudix box element. Gln-196 to Ser-203 is a binding site for substrate. Residue Glu-223 coordinates a divalent metal cation. Ala-246 contacts substrate.

The protein belongs to the Nudix hydrolase family. NudC subfamily. As to quaternary structure, homodimer. Requires Mg(2+) as cofactor. Mn(2+) is required as a cofactor. The cofactor is Zn(2+).

The enzyme catalyses a 5'-end NAD(+)-phospho-ribonucleoside in mRNA + H2O = a 5'-end phospho-adenosine-phospho-ribonucleoside in mRNA + beta-nicotinamide D-ribonucleotide + 2 H(+). It carries out the reaction NAD(+) + H2O = beta-nicotinamide D-ribonucleotide + AMP + 2 H(+). It catalyses the reaction NADH + H2O = reduced beta-nicotinamide D-ribonucleotide + AMP + 2 H(+). MRNA decapping enzyme that specifically removes the nicotinamide adenine dinucleotide (NAD) cap from a subset of mRNAs by hydrolyzing the diphosphate linkage to produce nicotinamide mononucleotide (NMN) and 5' monophosphate mRNA. The NAD-cap is present at the 5'-end of some mRNAs and stabilizes RNA against 5'-processing. Has preference for mRNAs with a 5'-end purine. Catalyzes the hydrolysis of a broad range of dinucleotide pyrophosphates. The sequence is that of NAD-capped RNA hydrolase NudC from Haemophilus influenzae (strain ATCC 51907 / DSM 11121 / KW20 / Rd).